Reading from the N-terminus, the 307-residue chain is uncharacterized protein (307 aa).

Residues 5–233 (VQTNGLTKTY…NTEYIELVTP (229 aa)) enclose the ABC transporter domain. 37–44 (GPNGAGKT) serves as a coordination point for ATP.

It belongs to the ABC transporter superfamily.

This is an uncharacterized protein from Bacillus subtilis (strain 168).